The primary structure comprises 86 residues: Large ribosomal subunit protein bL27 (86 aa).

It belongs to the bacterial ribosomal protein bL27 family.

This Flavobacterium psychrophilum (strain ATCC 49511 / DSM 21280 / CIP 103535 / JIP02/86) protein is Large ribosomal subunit protein bL27.